The chain runs to 403 residues: Poly(rC)-binding protein 4 (403 aa).

3 KH domains span residues 17–67, 101–154, and 241–293; these read TLTL…TITG, PVTL…TVSG, and TSSQ…TITG.

The protein resides in the cytoplasm. Its function is as follows. Single-stranded nucleic acid binding protein that binds preferentially to oligo dC. In Bos taurus (Bovine), this protein is Poly(rC)-binding protein 4 (PCBP4).